The following is a 158-amino-acid chain: MAETVEVLVPGGKATAGPPLGPALGPLGINVKAVVDDINKKTAEFNGMQVPVTVTVDDKKNFTIEVGIPPTTALVMKEAGITKGSTEPGALVAGDLPLEAAVRIARMKFDGMLSYDLKSAVKEVLGTCVSVGVTVEGKKPREMIQAVNNGEYDGVLVA.

It belongs to the universal ribosomal protein uL11 family. In terms of assembly, part of the ribosomal stalk of the 50S ribosomal subunit. Interacts with L10 and the large rRNA to form the base of the stalk. L10 forms an elongated spine to which L12 dimers bind in a sequential fashion forming a multimeric L10(L12)X complex.

Functionally, forms part of the ribosomal stalk which helps the ribosome interact with GTP-bound translation factors. The protein is Large ribosomal subunit protein uL11 of Methanoculleus marisnigri (strain ATCC 35101 / DSM 1498 / JR1).